A 409-amino-acid polypeptide reads, in one-letter code: ATPase ASNA1 homolog (409 aa).

21–28 (KGGVGKTT) is an ATP binding site. Aspartate 62 is a catalytic residue. The ATP site is built by glutamate 303 and asparagine 330. Zn(2+)-binding residues include cysteine 342 and cysteine 345.

It belongs to the arsA ATPase family. In terms of assembly, homodimer.

It is found in the cytoplasm. It localises to the endoplasmic reticulum. Its function is as follows. ATPase required for the post-translational delivery of tail-anchored (TA) proteins to the endoplasmic reticulum. Recognizes and selectively binds the transmembrane domain of TA proteins in the cytosol. This complex then targets to the endoplasmic reticulum by membrane-bound receptors, where the tail-anchored protein is released for insertion. This process is regulated by ATP binding and hydrolysis. ATP binding drives the homodimer towards the closed dimer state, facilitating recognition of newly synthesized TA membrane proteins. ATP hydrolysis is required for insertion. Subsequently, the homodimer reverts towards the open dimer state, lowering its affinity for the membrane-bound receptor, and returning it to the cytosol to initiate a new round of targeting. The chain is ATPase ASNA1 homolog from Leishmania major.